We begin with the raw amino-acid sequence, 648 residues long: Adhesion G-protein coupled receptor G1 (648 aa).

A signal peptide spans 1-24; sequence MKQNPAKTARMWIIICLLFVLGQA. Topologically, residues 25–370 are extracellular; the sequence is TDNDRDFKMC…STVRHLKALT (346 aa). Residues Cys34 and Cys96 are joined by a disulfide bond. Asn62, Asn91, Asn114, Asn146, Asn222, Asn262, and Asn286 each carry an N-linked (GlcNAc...) asparagine glycan. Cysteines 127 and 176 form a disulfide. The GAIN-B domain maps to 214–361; it reads MDEEFTGHNF…AILVQVEQKS (148 aa). Intrachain disulfides connect Cys313-Cys343 and Cys331-Cys345. Residues 313–361 are GPS; the sequence is CVSWDTKQDNEVNWKDDGCDTVKINEEQTECHCNHLTYFAILVQVEQKS. The segment at 349–361 is stachel; sequence TYFAILVQVEQKS. The helical transmembrane segment at 371–391 threads the bilayer; it reads FITAVGCAVSLVSCLVLFYWL. Residues 392 to 408 are Cytoplasmic-facing; that stretch reads CKRRRGKKNQISLVHRG. Residues 409-429 traverse the membrane as a helical segment; that stretch reads LVVAIFLLCLFFILTGILANV. Residues 430–443 lie on the Extracellular side of the membrane; sequence ANETVCQLTGSLLH. Asn431 carries N-linked (GlcNAc...) asparagine glycosylation. Residues 444 to 464 form a helical membrane-spanning segment; it reads YGLLSTLCWMAMEVFHTFLLV. Topologically, residues 465 to 471 are cytoplasmic; the sequence is RKVFNSP. Residues 472-492 traverse the membrane as a helical segment; that stretch reads LPIWIFYLMGFGFPFLLVSIL. The Extracellular portion of the chain corresponds to 493–530; the sequence is LSVGDIYGERKIKPSDDVNNPYRMCWMTEGDKSQLAHY. A helical membrane pass occupies residues 531–551; the sequence is IINIGLLAVVVSSGLVMLFLV. Residues 552 to 563 lie on the Cytoplasmic side of the membrane; sequence VREIRNRPDWKK. Residues 564 to 586 form a helical membrane-spanning segment; sequence IHVAFLSIWGLTCLYGTTWALGF. Topologically, residues 587–595 are extracellular; sequence LDFGPFSEV. A helical transmembrane segment spans residues 596 to 618; that stretch reads TLFLFCIINSLQGFFLMLRYYAL. Over 619 to 648 the chain is Cytoplasmic; the sequence is ERMKKKDVSSSDGSSSGSSKQHMLQTNEKS.

Belongs to the G-protein coupled receptor 2 family. LN-TM7 subfamily. Heterodimer of 2 chains generated by proteolytic processing; the large extracellular N-terminal fragment (ADGRG1 NT) and the membrane-bound C-terminal fragment (ADGRG1-CT) predominantly remain associated and non-covalently linked. In terms of processing, autoproteolytically cleaved into 2 fragments; the large extracellular N-terminal fragment (ADGRG1 NT) and the membrane-bound C-terminal fragment (ADGRG1 CT) predominantly remain associated and non-covalently linked.

Its subcellular location is the cell membrane. With respect to regulation, forms a heterodimer of 2 chains generated by proteolytic processing that remain associated through non-covalent interactions mediated by the GAIN-B domain. In the inactivated receptor, the Stachel sequence (also named stalk) is embedded in the GAIN-B domain, where it adopts a beta-strand conformation. On activation, the Stachel moves into the 7 transmembrane region and adopts a twisted hook-shaped configuration that forms contacts within the receptor, leading to coupling of a G-alpha protein, which activates signaling. The cleaved GAIN-B and N-terminal domains can then dissociate from the rest of the receptor. In terms of biological role, adhesion G-protein coupled receptor (aGPCR), which is involved in oligodendrocyte development and maintenance of peripheral myelin. Ligand binding causes a conformation change that triggers signaling via guanine nucleotide-binding proteins (G proteins) and modulates the activity of downstream effectors, such as RhoA pathway. Adgrg1 is coupled to G(12) and/or G(13) G proteins (gna12 and gna13, respectively) and mediates the activation Rho small GTPases. Adgrg1-dependent RhoA signaling promotes timely radial sorting of axons. Required to establish proper myelin thickness and facilitate organization of the myelin sheath in the mature peripheral nervous system. The polypeptide is Adhesion G-protein coupled receptor G1 (Danio rerio (Zebrafish)).